We begin with the raw amino-acid sequence, 255 residues long: Arginine-binding extracellular protein ArtP (255 aa).

An N-terminal signal peptide occupies residues 1–19 (MKKWLLLLVAACITFALTA). The N-palmitoyl cysteine moiety is linked to residue Cys-20. The S-diacylglycerol cysteine moiety is linked to residue Cys-20.

This sequence belongs to the bacterial solute-binding protein 3 family.

It is found in the cell membrane. In terms of biological role, part of a binding-protein-dependent transport system for arginine. The polypeptide is Arginine-binding extracellular protein ArtP (artP) (Bacillus subtilis (strain 168)).